A 298-amino-acid polypeptide reads, in one-letter code: MQSIFDRVTVKNLFEVGAHLGHKTRFWNPKMVSYIYGTSNAKTHIVDLQKTVPMLRTALNAISDVAANSGRVLFVGTKMQACDIIKEEATRCGQYYVNLRWPSGMFTNWNTVSKSVKKLVHYEKLLEQEGDVLSKKERLSINRKRERIEKYLGGVRKMGGLPNIIFVIDPKKEHIAVEEAWKLGIPVVAVVDTNCDPSKITYAIPGNDDSLRCIEYYCSLVADAVLVGIESELQRKQSKELDDKADEKAAKVSHSDGQKKGASIRAGTDKAALQKRKVSPKSEKQDNVDAAKLPENKG.

2 stretches are compositionally biased toward basic and acidic residues: residues 237 to 259 and 280 to 298; these read QSKE…DGQK and PKSE…ENKG. The interval 237-298 is disordered; the sequence is QSKELDDKAD…DAAKLPENKG (62 aa).

Belongs to the universal ribosomal protein uS2 family.

This Neorickettsia sennetsu (strain ATCC VR-367 / Miyayama) (Ehrlichia sennetsu) protein is Small ribosomal subunit protein uS2.